The primary structure comprises 460 residues: Tyrosine-protein phosphatase non-receptor type 18 (460 aa).

The Tyrosine-protein phosphatase domain maps to 26–291 (LAGEFSDIQA…RFLYHTVAQM (266 aa)). Residues D197, 229-235 (CSAGCGR), and Q276 each bind substrate. The active-site Phosphocysteine intermediate is C229. A disordered region spans residues 361–460 (GAPAGAGSGT…RDPPAEWTRV (100 aa)). Positions 364–378 (AGAGSGTQTGTGTGT) are enriched in gly residues. The residue at position 389 (Y389) is a Phosphotyrosine. Residue T393 is modified to Phosphothreonine. Phosphotyrosine is present on Y426. Positions 449–460 (GPRDPPAEWTRV) are enriched in basic and acidic residues.

Belongs to the protein-tyrosine phosphatase family. Non-receptor class 4 subfamily. As to quaternary structure, interacts with PSTPIP1. Expressed in brain, colon and several tumor-derived cell lines.

It is found in the nucleus. It localises to the cytoplasm. The catalysed reaction is O-phospho-L-tyrosyl-[protein] + H2O = L-tyrosyl-[protein] + phosphate. Functionally, differentially dephosphorylate autophosphorylated tyrosine kinases which are known to be overexpressed in tumor tissues. The chain is Tyrosine-protein phosphatase non-receptor type 18 (PTPN18) from Homo sapiens (Human).